We begin with the raw amino-acid sequence, 516 residues long: Alstonine synthase (516 aa).

The helical transmembrane segment at 6-26 (NFSLTSPIFLLLSSLFLIILL) threads the bilayer. C453 provides a ligand contact to heme.

This sequence belongs to the cytochrome P450 family. Requires heme as cofactor. In terms of tissue distribution, highly expressed in stems. Expressed at low levels in roots.

The protein localises to the endoplasmic reticulum membrane. The enzyme catalyses tetrahydroalstonine + A + reduced [NADPH--hemoprotein reductase] + O2 = alstonine + AH2 + oxidized [NADPH--hemoprotein reductase] + 2 H2O + H(+). It carries out the reaction ajmalicine + A + reduced [NADPH--hemoprotein reductase] + O2 = serpentine + AH2 + oxidized [NADPH--hemoprotein reductase] + 2 H2O + H(+). It participates in alkaloid biosynthesis. Functionally, involved in monoterpene indole alkaloids (MIAs) biosynthesis. Converts by aromatization the tetrahydro-beta-carboline alkaloids tetrahydroalstonine and ajmalicine to the corresponding beta-carboline alkaloids alstonine and serpentine, respectively. The protein is Alstonine synthase of Catharanthus roseus (Madagascar periwinkle).